The primary structure comprises 235 residues: MAAKIFCLLMLLGLSASAATATIFPQCSQAPIASLLPPYLSPAVSSVCENPILQPYRIQQAIAAGILPLSPLFLQQSSALLQQLPLVHLLAQNIRAQQLQQLVLANVAAYSQQQQFLPFNQLAALNSAAYLQQQQLLPFSQLTAAYPQQFLPFNQLAALNSAAYLQQQQLLPFSQLAVVSPAAFLTQQQLLPFYLHAVPNAGTLLQLQQLLPFNQLALTNPAAFYQQPIIGGALF.

The N-terminal stretch at Met1–Ala21 is a signal peptide.

Belongs to the zein family.

In terms of biological role, zeins are major seed storage proteins. The chain is Zein-alpha PMS1 (ZMPMS1) from Zea mays (Maize).